The sequence spans 135 residues: Evasin P1134 (135 aa).

The N-terminal stretch at 1–31 is a signal peptide; the sequence is MEVKTFAFLQIAVFIALGIQIFAAVTAAADA. 3 disulfides stabilise this stretch: Cys41-Cys63, Cys45-Cys65, and Cys56-Cys76. A glycan (N-linked (GlcNAc...) asparagine) is linked at Asn44. Positions 88–112 are disordered; that stretch reads ETPSNSDLEAATPRPRKTLYPVRNP.

Its subcellular location is the secreted. Salivary chemokine-binding protein which binds to host chemokine CXCL1. The sequence is that of Evasin P1134 from Ixodes ricinus (Common tick).